The primary structure comprises 574 residues: Thiol:disulfide interchange protein DsbD (574 aa).

An N-terminal signal peptide occupies residues 1–19 (MAHRILTLILLFCSAHASA). A disulfide bond links C122 and C128. The tract at residues 147–169 (VKANAATPSAATGEQTRVNSDSP) is disordered. A compositionally biased stretch (polar residues) spans 152–169 (ATPSAATGEQTRVNSDSP). 7 helical membrane-spanning segments follow: residues 173 to 193 (LPFS…TPCV), 218 to 238 (LLAF…GLVV), 253 to 273 (WVLV…FGLF), 306 to 326 (IAGL…LLYI), 333 to 353 (WLGG…LILV), 367 to 387 (WMEQ…VFLL), and 399 to 419 (LWSV…LNAT). C192 and C314 are joined by a disulfide. Residues 430–574 (LLGAAMICAR…FATHLHNRLR (145 aa)) form the Thioredoxin domain. C489 and C492 form a disulfide bridge.

Belongs to the thioredoxin family. DsbD subfamily.

It is found in the cell inner membrane. The catalysed reaction is [protein]-dithiol + NAD(+) = [protein]-disulfide + NADH + H(+). It carries out the reaction [protein]-dithiol + NADP(+) = [protein]-disulfide + NADPH + H(+). Its function is as follows. Required to facilitate the formation of correct disulfide bonds in some periplasmic proteins and for the assembly of the periplasmic c-type cytochromes. Acts by transferring electrons from cytoplasmic thioredoxin to the periplasm. This transfer involves a cascade of disulfide bond formation and reduction steps. This Cronobacter sakazakii (strain ATCC BAA-894) (Enterobacter sakazakii) protein is Thiol:disulfide interchange protein DsbD.